Consider the following 352-residue polypeptide: WAT1-related protein At1g11450 (352 aa).

The next 10 membrane-spanning stretches (helical) occupy residues Trp14 to Val34, Ile46 to Leu66, Phe83 to Tyr103, Thr107 to Leu127, Ala139 to Phe159, Trp187 to Phe207, Phe219 to Tyr239, Phe253 to Ala273, Val283 to Ile303, and Leu308 to Trp328. EamA domains follow at residues Met27–Leu157 and Leu192–Glu335.

It belongs to the drug/metabolite transporter (DMT) superfamily. Plant drug/metabolite exporter (P-DME) (TC 2.A.7.4) family.

It localises to the membrane. The chain is WAT1-related protein At1g11450 from Arabidopsis thaliana (Mouse-ear cress).